A 330-amino-acid chain; its full sequence is Beta-ketoacyl-[acyl-carrier-protein] synthase III (330 aa).

Residues C114 and H255 contribute to the active site. An ACP-binding region spans residues 256-260 (QANQR). N285 is a catalytic residue.

It belongs to the thiolase-like superfamily. FabH family. Homodimer.

It localises to the cytoplasm. It catalyses the reaction malonyl-[ACP] + acetyl-CoA + H(+) = 3-oxobutanoyl-[ACP] + CO2 + CoA. The protein operates within lipid metabolism; fatty acid biosynthesis. Catalyzes the condensation reaction of fatty acid synthesis by the addition to an acyl acceptor of two carbons from malonyl-ACP. Catalyzes the first condensation reaction which initiates fatty acid synthesis and may therefore play a role in governing the total rate of fatty acid production. Possesses both acetoacetyl-ACP synthase and acetyl transacylase activities. Its substrate specificity determines the biosynthesis of branched-chain and/or straight-chain of fatty acids. This is Beta-ketoacyl-[acyl-carrier-protein] synthase III from Nostoc sp. (strain PCC 7120 / SAG 25.82 / UTEX 2576).